The primary structure comprises 861 residues: FO synthase (861 aa).

Radical SAM core domains lie at 69 to 319 (ITYS…LQAP) and 528 to 763 (VTYI…LLHP). Residues 70–401 (TYSKSVFIPL…PRLLPHVRAL (332 aa)) form a cofG-like region. [4Fe-4S] cluster is bound by residues cysteine 83, cysteine 87, cysteine 90, cysteine 542, cysteine 546, and cysteine 549. Residues 505–838 (DGPALDALTR…KPRTTLYGEV (334 aa)) form a cofH-like region.

The protein in the N-terminal section; belongs to the radical SAM superfamily. CofG family. It in the C-terminal section; belongs to the radical SAM superfamily. CofH family. It depends on [4Fe-4S] cluster as a cofactor.

The enzyme catalyses 5-amino-6-(D-ribitylamino)uracil + L-tyrosine + S-adenosyl-L-methionine = 5-amino-5-(4-hydroxybenzyl)-6-(D-ribitylimino)-5,6-dihydrouracil + 2-iminoacetate + 5'-deoxyadenosine + L-methionine + H(+). The catalysed reaction is 5-amino-5-(4-hydroxybenzyl)-6-(D-ribitylimino)-5,6-dihydrouracil + S-adenosyl-L-methionine = 7,8-didemethyl-8-hydroxy-5-deazariboflavin + 5'-deoxyadenosine + L-methionine + NH4(+) + H(+). Its pathway is cofactor biosynthesis; coenzyme F0 biosynthesis. Catalyzes the radical-mediated synthesis of 7,8-didemethyl-8-hydroxy-5-deazariboflavin (FO) from 5-amino-6-(D-ribitylamino)uracil and L-tyrosine. The polypeptide is FO synthase (fbiC) (Streptomyces avermitilis (strain ATCC 31267 / DSM 46492 / JCM 5070 / NBRC 14893 / NCIMB 12804 / NRRL 8165 / MA-4680)).